Here is a 476-residue protein sequence, read N- to C-terminus: MKWEVVIGLEVHAQLSTQSKIFSGASTAFGAAPNTQACAVDIALPGVLPVMNRVAMEKAVRFGLAIGATVNPVSIFARKNYFYPDLPKGYQISQFEKPIVEGGQIAIRVGETERRINLTRAHLEEDAGKSLHEEFEGSTGIDLNRAGTPLLEIVSEPEMRSAAEAVAYARALHGLVTWLGICDGNMQEGSFRVDANVSVRPEGQAEFGTRREIKNLNSFRFLEQAINYEVQWQIDLIEDGGKVQQATVLFDPATGETRAMRSKEDAHDYRYFPDPDLLPLTVTEADFAAVRADMPELPGEMAARFVESFGVPELDAAQLTQSLDVARYFEAAAAASGQGKLAANWITGELAARLNREDMALAACPIAPERLAGLLVRIADNTVSSKLARQVFDALWDSELSADAVIERDGLKQVSDAGAIEKLVDDAIAGNPKAVEEFRAGKEKALNALAGQVMKASKGKANPAQVQDILRQKLAG.

This sequence belongs to the GatB/GatE family. GatB subfamily. As to quaternary structure, heterotrimer of A, B and C subunits.

It carries out the reaction L-glutamyl-tRNA(Gln) + L-glutamine + ATP + H2O = L-glutaminyl-tRNA(Gln) + L-glutamate + ADP + phosphate + H(+). It catalyses the reaction L-aspartyl-tRNA(Asn) + L-glutamine + ATP + H2O = L-asparaginyl-tRNA(Asn) + L-glutamate + ADP + phosphate + 2 H(+). Its function is as follows. Allows the formation of correctly charged Asn-tRNA(Asn) or Gln-tRNA(Gln) through the transamidation of misacylated Asp-tRNA(Asn) or Glu-tRNA(Gln) in organisms which lack either or both of asparaginyl-tRNA or glutaminyl-tRNA synthetases. The reaction takes place in the presence of glutamine and ATP through an activated phospho-Asp-tRNA(Asn) or phospho-Glu-tRNA(Gln). In Laribacter hongkongensis (strain HLHK9), this protein is Aspartyl/glutamyl-tRNA(Asn/Gln) amidotransferase subunit B.